Here is a 289-residue protein sequence, read N- to C-terminus: MHFQNVILTLQNYWASRGCVITQPIDVECGAGTFNPSTFLRVIGPEPWNVAYVEPSRRPTDGRYGENPNRLQHYFQFQVILKPSPDNVQELYLGSLRALGIDPAAHDIRFVEDDWESPTLGAWGLGWEVWLNGMEVTQFTYFQQVGGIDLAPTSVEITYGLERLCMYLQGKESVYDLDWNEHVTYGDIYHQNEVEQSKYNFERSDAAMLLHAFNAYETECRRLTEEGLLWPAYDYCLKCSHTFNLLDARGAISITERTGYIGRVRYLASGVARLYAAQREQLGYPMLRK.

It belongs to the class-II aminoacyl-tRNA synthetase family. In terms of assembly, tetramer of two alpha and two beta subunits.

It localises to the cytoplasm. The catalysed reaction is tRNA(Gly) + glycine + ATP = glycyl-tRNA(Gly) + AMP + diphosphate. The polypeptide is Glycine--tRNA ligase alpha subunit (Nitratidesulfovibrio vulgaris (strain ATCC 29579 / DSM 644 / CCUG 34227 / NCIMB 8303 / VKM B-1760 / Hildenborough) (Desulfovibrio vulgaris)).